Consider the following 101-residue polypeptide: Large ribosomal subunit protein uL23 (101 aa).

It belongs to the universal ribosomal protein uL23 family. In terms of assembly, part of the 50S ribosomal subunit. Contacts protein L29, and trigger factor when it is bound to the ribosome.

Functionally, one of the early assembly proteins it binds 23S rRNA. One of the proteins that surrounds the polypeptide exit tunnel on the outside of the ribosome. Forms the main docking site for trigger factor binding to the ribosome. This is Large ribosomal subunit protein uL23 from Azoarcus sp. (strain BH72).